The sequence spans 595 residues: Glycine betaine transporter BetP (595 aa).

Residues 1–59 lie on the Cytoplasmic side of the membrane; that stretch reads MTTSDPNPKPIVEDAQPEQITATEELAGLLENPTNLEGKLADAEEEIILEGEDTQASLN. The chain crosses the membrane as a helical span at residues 60 to 80; the sequence is WSVIVPALVIVLATVVWGIGF. The Periplasmic segment spans residues 81 to 98; sequence KDSFTNFASSALSAVVDN. A helical transmembrane segment spans residues 99–119; that stretch reads LGWAFILFGTVFVFFIVVIAA. The Cytoplasmic segment spans residues 120-137; the sequence is SKFGTIRLGRIDEAPEFR. Residues 138–158 traverse the membrane as a helical segment; the sequence is TVSWISMMFAAGMGIGLMFYG. Positions 147, 148, and 150 each coordinate Na(+). 152–153 contributes to the glycine betaine binding site; the sequence is IG. The Periplasmic portion of the chain corresponds to 159–185; the sequence is TTEPLTFYRNGVPGHDEHNVGVAMSTT. Residues 186–206 traverse the membrane as a helical segment; that stretch reads MFHWTLHPWAIYAIVGLAIAY. Topologically, residues 207–236 are cytoplasmic; the sequence is STFRVGRKQLLSSAFVPLIGEKGAEGWLGK. Residues 237–257 traverse the membrane as a helical segment; that stretch reads LIDILAIIATVFGTACSLGLG. S253 lines the glycine betaine pocket. Residues 258 to 276 lie on the Periplasmic side of the membrane; sequence ALQIGAGLSAANIIEDPSD. A helical membrane pass occupies residues 277–296; sequence WTIVGIVSVLTLAFIFSAIS. At 297 to 299 the chain is on the cytoplasmic side; the sequence is GVG. A helical transmembrane segment spans residues 300–323; sequence KGIQYLSNANMVLAALLAIFVFVV. Residues S306 and M310 each coordinate Na(+). Over 324 to 365 the chain is Periplasmic; it reads GPTVSILNLLPGSIGNYLSNFFQMAGRTAMSADGTAGEWLGS. A helical membrane pass occupies residues 366 to 386; sequence WTIFYWAWWISWSPFVGMFLA. 373–377 contacts glycine betaine; sequence WWISW. Topologically, residues 387 to 396 are cytoplasmic; that stretch reads RISRGRSIRE. A helical membrane pass occupies residues 397–417; sequence FILGVLLVPAGVSTVWFSIFG. Over 418 to 451 the chain is Periplasmic; it reads GTAIVFEQNGESIWGDGAAEEQLFGLLHALPGGQ. The chain crosses the membrane as a helical span at residues 452–476; the sequence is IMGIIAMILLGTFFITSADSASTVM. At 477–489 the chain is on the cytoplasmic side; that stretch reads GTMSQHGQLEANK. The chain crosses the membrane as a helical span at residues 490–510; sequence WVTAAWGVATAAIGLTLLLSG. The Periplasmic segment spans residues 511–520; that stretch reads GDNALSNLQN. Residues 521-541 traverse the membrane as a helical segment; that stretch reads VTIVAATPFLFVVIGLMFALV. Over 542–595 the chain is Cytoplasmic; that stretch reads KDLSNDVIYLEYREQQRFNARLARERRVHNEHRKRELAAKRRRERKASGAGKRR. The disordered stretch occupies residues 570–595; it reads HNEHRKRELAAKRRRERKASGAGKRR. The span at 581–595 shows a compositional bias: basic residues; the sequence is KRRRERKASGAGKRR.

Belongs to the BCCT transporter (TC 2.A.15) family. In terms of assembly, homotrimer. The monomer can accumulate glycine betaine, but trimerization is required to properly respond to osmotic stress.

It is found in the cell inner membrane. With respect to regulation, uptake is activated by hyperosmotic stress. Osmoresponsive activation is triggered by a change in the internal K(+) concentration. In addition, shows a pronounced chill stimulation, at temperatures around 10 degrees Celsius. Chill activation may be influenced by the membrane lipid composition. Uptake is completely abolished by the uncoupler CCCP, and to a different extent by the ionophores valinomycin and nigericin. Involved in response to osmotic stress. High-affinity glycine betaine-specific uptake system, which couples the uptake of glycine betaine to the symport of two Na(+) ions. Transport is driven both by the Na(+) gradient and by the electrical potential. In addition, functions both as an osmosensor and as an osmoregulator that transduces signal to the catalytic part of the carrier protein, which adapts its activity to the extent of osmotic stress. In Corynebacterium glutamicum (strain ATCC 13032 / DSM 20300 / JCM 1318 / BCRC 11384 / CCUG 27702 / LMG 3730 / NBRC 12168 / NCIMB 10025 / NRRL B-2784 / 534), this protein is Glycine betaine transporter BetP.